The chain runs to 139 residues: 3-hydroxyacyl-[acyl-carrier-protein] dehydratase FabZ (139 aa).

Residue His46 is part of the active site.

The protein belongs to the thioester dehydratase family. FabZ subfamily.

The protein resides in the cytoplasm. It catalyses the reaction a (3R)-hydroxyacyl-[ACP] = a (2E)-enoyl-[ACP] + H2O. Functionally, involved in unsaturated fatty acids biosynthesis. Catalyzes the dehydration of short chain beta-hydroxyacyl-ACPs and long chain saturated and unsaturated beta-hydroxyacyl-ACPs. This chain is 3-hydroxyacyl-[acyl-carrier-protein] dehydratase FabZ, found in Streptococcus pyogenes serotype M1.